The primary structure comprises 152 residues: Transcriptional regulator MraZ (152 aa).

2 consecutive SpoVT-AbrB domains span residues 5 to 52 (VTSI…PLHE) and 81 to 124 (ATEC…QDKQ).

Belongs to the MraZ family. In terms of assembly, forms oligomers.

It localises to the cytoplasm. It is found in the nucleoid. The chain is Transcriptional regulator MraZ from Actinobacillus pleuropneumoniae serotype 5b (strain L20).